We begin with the raw amino-acid sequence, 401 residues long: NADH-quinone oxidoreductase subunit D 2 (401 aa).

The protein belongs to the complex I 49 kDa subunit family. NDH-1 is composed of 14 different subunits. Subunits NuoB, C, D, E, F, and G constitute the peripheral sector of the complex.

Its subcellular location is the cell inner membrane. It carries out the reaction a quinone + NADH + 5 H(+)(in) = a quinol + NAD(+) + 4 H(+)(out). Functionally, NDH-1 shuttles electrons from NADH, via FMN and iron-sulfur (Fe-S) centers, to quinones in the respiratory chain. The immediate electron acceptor for the enzyme in this species is believed to be ubiquinone. Couples the redox reaction to proton translocation (for every two electrons transferred, four hydrogen ions are translocated across the cytoplasmic membrane), and thus conserves the redox energy in a proton gradient. The chain is NADH-quinone oxidoreductase subunit D 2 from Koribacter versatilis (strain Ellin345).